The sequence spans 66 residues: Large ribosomal subunit protein bL35 (66 aa).

Residues 20–40 form a disordered region; it reads GKIKSTQSAKRHGMTKRSKRS. The segment covering 28–40 has biased composition (basic residues); the sequence is AKRHGMTKRSKRS.

Belongs to the bacterial ribosomal protein bL35 family.

In Ehrlichia chaffeensis (strain ATCC CRL-10679 / Arkansas), this protein is Large ribosomal subunit protein bL35.